Reading from the N-terminus, the 540-residue chain is MAKMIAFDEEARRGLERGMNQLADAVKVTLGPKGRNVVLEKKWGAPTITNDGVSIAKEIELEDPYEKIGAELVKEVAKKTDDVAGDGTTTATVLAQAMVREGLRNVAAGANPMALKRGIETAVASVSEELLKLAKDVETKEQIASTASISAGDPSVGEIIAEAMDKVGKEGVITVEESNTFGLELELTEGMRFDKGYISAYFMTDPERMEAVFDDPYILIVNSKISSVKDLLPILEKVMQSGKPLLIIAEDIEGEALATLVVNKVRGTFKSVAVKAPGFGDRRKAMLGDIAILTGGQVISEEVGLKLDAVNLDMVGRARKVVVTKDETTIVDGAGDAEQIQGRVNQIRAEIDKSDSDYDREKLQERLAKLAGGVAVIKVGAATEVELKERKHRIEDAVRNAKAAVEEGIVPGGGVALVQAGKTAFDKLDLTGDEATGAQIVKIALDGPLRQIAVNAGLEGGVVVEHVRGIEAGHGLNAATGGYVDLMAAGIIDPAKVTRSALQNASSIAALFLTTEAVVADKPEKTPAAPAAPGGGEMDF.

Residues 29–32, 86–90, Gly-413, 477–479, and Asp-493 contribute to the ATP site; these read TLGP, DGTTT, and NAA.

This sequence belongs to the chaperonin (HSP60) family. As to quaternary structure, forms a cylinder of 14 subunits composed of two heptameric rings stacked back-to-back. Interacts with the co-chaperonin GroES.

It localises to the cytoplasm. The catalysed reaction is ATP + H2O + a folded polypeptide = ADP + phosphate + an unfolded polypeptide.. Functionally, together with its co-chaperonin GroES, plays an essential role in assisting protein folding. The GroEL-GroES system forms a nano-cage that allows encapsulation of the non-native substrate proteins and provides a physical environment optimized to promote and accelerate protein folding. The sequence is that of Chaperonin GroEL 1 from Salinispora arenicola (strain CNS-205).